Consider the following 163-residue polypeptide: Protein-export protein SecB (163 aa).

It belongs to the SecB family. As to quaternary structure, homotetramer, a dimer of dimers. One homotetramer interacts with 1 SecA dimer.

It localises to the cytoplasm. In terms of biological role, one of the proteins required for the normal export of preproteins out of the cell cytoplasm. It is a molecular chaperone that binds to a subset of precursor proteins, maintaining them in a translocation-competent state. It also specifically binds to its receptor SecA. The sequence is that of Protein-export protein SecB from Brucella anthropi (strain ATCC 49188 / DSM 6882 / CCUG 24695 / JCM 21032 / LMG 3331 / NBRC 15819 / NCTC 12168 / Alc 37) (Ochrobactrum anthropi).